Reading from the N-terminus, the 629-residue chain is tRNA uridine 5-carboxymethylaminomethyl modification enzyme MnmG (629 aa).

An FAD-binding site is contributed by 13 to 18; sequence GGGHAG. Position 273 to 287 (273 to 287) interacts with NAD(+); sequence GPRYCPSIEDKIHRF.

This sequence belongs to the MnmG family. In terms of assembly, homodimer. Heterotetramer of two MnmE and two MnmG subunits. Requires FAD as cofactor.

It is found in the cytoplasm. Its function is as follows. NAD-binding protein involved in the addition of a carboxymethylaminomethyl (cmnm) group at the wobble position (U34) of certain tRNAs, forming tRNA-cmnm(5)s(2)U34. The protein is tRNA uridine 5-carboxymethylaminomethyl modification enzyme MnmG of Shewanella baltica (strain OS155 / ATCC BAA-1091).